Reading from the N-terminus, the 313-residue chain is Small ribosomal subunit protein uS2 (313 aa).

Position 2 is an N-acetylserine (serine 2). Laminin-binding regions lie at residues 161 to 180 (IPCN…MLAR) and 205 to 229 (RDPE…EFQG). [DE]-W-[ST] repeat units lie at residues 230 to 232 (EWS) and 245 to 247 (DWS). The tract at residues 242 to 313 (EVADWSEGVA…DWGGTTSDWS (72 aa)) is laminin-binding. Low complexity predominate over residues 262 to 274 (PATAAAAAAAAPP). Positions 262 to 313 (PATAAAAAAAAPPVKTGEVFSEDWSTQPATDDWSTAPTAQASDWGGTTSDWS) are disordered. [DE]-W-[ST] repeat units follow at residues 284–286 (DWS), 293–295 (DWS), and 311–313 (DWS). Residues 284–313 (DWSTQPATDDWSTAPTAQASDWGGTTSDWS) are compositionally biased toward polar residues.

It belongs to the universal ribosomal protein uS2 family. In terms of assembly, monomer (37LRP) and homodimer (67LR). Component of the small ribosomal subunit. Mature ribosomes consist of a small (40S) and a large (60S) subunit. The 40S subunit contains about 33 different proteins and 1 molecule of RNA (18S). The 60S subunit contains about 49 different proteins and 3 molecules of RNA (28S, 5.8S and 5S). Interacts with rps21. Interacts with several laminins including at least lamb1. Interacts with mdk. Acylated. Acylation may be a prerequisite for conversion of the monomeric 37 kDa laminin receptor precursor (37LRP) to the mature dimeric 67 kDa laminin receptor (67LR), and may provide a mechanism for membrane association. In terms of processing, cleaved by stromelysin-3 (ST3) at the cell surface. Cleavage by stromelysin-3 may be a mechanism to alter cell-extracellular matrix interactions.

Its subcellular location is the cell membrane. It localises to the cytoplasm. The protein localises to the nucleus. Required for the assembly and/or stability of the 40S ribosomal subunit. Required for the processing of the 20S rRNA-precursor to mature 18S rRNA in a late step of the maturation of 40S ribosomal subunits. Also functions as a cell surface receptor for laminin. Plays a role in cell adhesion to the basement membrane and in the consequent activation of signaling transduction pathways. May play a role in cell fate determination and tissue morphogenesis. In Solea senegalensis (Senegalese sole), this protein is Small ribosomal subunit protein uS2 (rpsa).